The following is a 326-amino-acid chain: UPF0324 membrane protein PBPRB0970 (326 aa).

A run of 10 helical transmembrane segments spans residues 27 to 49 (FFII…ILGF), 70 to 89 (LLAY…QAIA), 94 to 116 (GFGL…TKAL), 123 to 145 (GHLI…APAI), 155 to 177 (ALAT…GHLL), 184 to 206 (FGTW…GAYG), 216 to 235 (IKLA…ALLF), 242 to 261 (IGIP…AHFV), 271 to 290 (IFVA…GSGI), and 303 to 325 (LLLG…LLNV).

The protein belongs to the UPF0324 family.

It localises to the cell membrane. This Photobacterium profundum (strain SS9) protein is UPF0324 membrane protein PBPRB0970.